Reading from the N-terminus, the 215-residue chain is Probable phosphoglycerate mutase GpmB (215 aa).

Residues 8 to 15, 21 to 22, R58, 82 to 85, and 151 to 152 contribute to the substrate site; these read RHGETVWN, QG, ELNM, and GM. The Tele-phosphohistidine intermediate role is filled by H9. Catalysis depends on E82, which acts as the Proton donor/acceptor.

Belongs to the phosphoglycerate mutase family. GpmB subfamily.

The catalysed reaction is (2R)-2-phosphoglycerate = (2R)-3-phosphoglycerate. It functions in the pathway carbohydrate degradation; glycolysis; pyruvate from D-glyceraldehyde 3-phosphate: step 3/5. This Yersinia enterocolitica serotype O:8 / biotype 1B (strain NCTC 13174 / 8081) protein is Probable phosphoglycerate mutase GpmB.